A 426-amino-acid chain; its full sequence is Histidine--tRNA ligase 1 (426 aa).

It belongs to the class-II aminoacyl-tRNA synthetase family. As to quaternary structure, homodimer.

Its subcellular location is the cytoplasm. It catalyses the reaction tRNA(His) + L-histidine + ATP = L-histidyl-tRNA(His) + AMP + diphosphate + H(+). In Bacillus cereus (strain ATCC 14579 / DSM 31 / CCUG 7414 / JCM 2152 / NBRC 15305 / NCIMB 9373 / NCTC 2599 / NRRL B-3711), this protein is Histidine--tRNA ligase 1.